Reading from the N-terminus, the 193-residue chain is Thioredoxin reductase-like selenoprotein T1b (193 aa).

The signal sequence occupies residues 1–21 (METRCLYLLLVCVLSVNHATA). A cross-link (cysteinyl-selenocysteine (Cys-Sec)) is located at residues 44-47 (CVSU). Position 47 (selenocysteine 47) is a non-standard amino acid, selenocysteine.

It belongs to the SelWTH family. Selenoprotein T subfamily. May contain a selenide-sulfide bond between Cys-44 and Sec-47. This bond is speculated to serve as redox-active pair. As to expression, widely expressed in the embryo. High level in embryonic blood at 24 hours post-fertilization (hpf).

It is found in the endoplasmic reticulum membrane. The enzyme catalyses [thioredoxin]-dithiol + NADP(+) = [thioredoxin]-disulfide + NADPH + H(+). In terms of biological role, selenoprotein with thioredoxin reductase-like oxidoreductase activity. The sequence is that of Thioredoxin reductase-like selenoprotein T1b from Danio rerio (Zebrafish).